We begin with the raw amino-acid sequence, 326 residues long: Zinc finger CCCH domain-containing protein 15 (326 aa).

A compositionally biased stretch (gly residues) spans 1 to 14; the sequence is MADGGGGGEAGSGG. The segment at 1–142 is disordered; the sequence is MADGGGGGEA…SSSGSGSGEV (142 aa). The segment covering 24–33 has biased composition (basic residues); sequence KPPKNIRKRP. Residues 47 to 64 are compositionally biased toward low complexity; it reads SGAIAAARAKKAPSSTSK. Polar residues predominate over residues 81–100; it reads YESSRTIQASTDSRATATLE. Residues 104-125 are compositionally biased toward basic and acidic residues; sequence EFDRDARAIRERQLKQAEESLK. Residues 187-215 form a C3H1-type zinc finger; that stretch reads DYQPDICKDYKETGYCGYGDSCKFMHDRG. An RING-type zinc finger spans residues 265–303; it reads CYICREPFVDPVVTKCKHYFCEHCALKHHSKNKKCFVCN.

This is Zinc finger CCCH domain-containing protein 15 from Oryza sativa subsp. japonica (Rice).